Here is a 238-residue protein sequence, read N- to C-terminus: Sugar fermentation stimulation protein homolog (238 aa).

This sequence belongs to the SfsA family.

This chain is Sugar fermentation stimulation protein homolog, found in Pseudoalteromonas translucida (strain TAC 125).